The following is a 1012-amino-acid chain: MTEAKTGTGNERLVVEIVGAHNLMPKDGEDSSSPFVEVQFENQRLRTKVKPKDLNPIWNEKLVFHVIDVNDLRHKALEINVYNEKRSSNSRNFLGKVRVLGSSVGREGESVVQLYTLEKRSLFSSVRGEISVKHYMTTTAENGENVRRVNRSGGSKKSKKVQNVSSSMAIQQQQQQQQQQISLHNHNRGNQQQSQQNGQGQRMLPFYPHQSEIKPLVITALPSPMPGPGPRPIVYSNGSSEFSLKETKPCLGGTSNGLGGLSSHKDKTSSTYDLVEQMQYLYVNIVKAKDLSVLGEVVSEVKLGNYRGVTKKVSSNSSNPEWNQVFVFSKERIQSSVVELFVKEGNKDEYTGRVLFDLSEIPTRVPPDSPLAPQWYKIENRNGGRGNGELMVSVWFGTQADEAFAEAWHSKAGNVHIEELSSIKSKVYLSPKLWYLRISVIEAQDVAIMDKGSSLMRFPELSAKLQVGSQILRTAIASAIPTKSFSNPYWNEDLMFVVAEPFEDCVTVVVEDRLNGGAIGGQNDVAVGRVQIPISAVERRTGDTLVGSRWFSLDNGNNNNRFGSRIHLRLSLDGGYHVLDEATMYNSDVRPTAKELWKPQVGLLEIGILSATGLMPMKVRDGKCGGIADSYCVAKYGPKWVRTRTVVDSLCPKWNEQYTWEVYDPCTVVTVGVFDNARVNENNNSRDVRIGKVRIRLSTLETGRVYTHSYPLIVLHPSGVKKTGELHLAVRLSCGNAVNMLHMYALPLLPKMHYTQPLGVHMLERLRYQTLNAVAARLSRAEPPLGREVVEYMLDHDFHVWSMRRSKANFFRLVNVISGLVAVAKLVEVMRSWSKPVYSTVFVLAFLFMVLFPELLLPCLLLYTAAVGVWRFRRRSRYPPHMDARISHAETVFPDELDEEFDTFPTSRGFDVVRMRYDRVRSIAGRVQTVVGDMASQGERVQALLSWRDPRATFLFLMFCLLAAVGFYTVPVKLTVAISGLYYLRPPRFRRKLPSRGLSFFRRLPSRADSLL.

Residues 1–115 (MTEAKTGTGN…REGESVVQLY (115 aa)) enclose the C2 1 domain. Residues 141 to 203 (ENGENVRRVN…SQQNGQGQRM (63 aa)) form a disordered region. Residues 148-160 (RVNRSGGSKKSKK) show a composition bias toward basic residues. 2 stretches are compositionally biased toward low complexity: residues 161–180 (VQNV…QQQQ) and 188–202 (RGNQ…QGQR). C2 domains follow at residues 262-376 (SSHK…PQWY), 411-551 (KAGN…SRWF), and 585-710 (YNSD…THSY). Ca(2+) contacts are provided by glutamate 296, glutamate 344, asparagine 346, and glutamate 349. Helical transmembrane passes span 810–830 (FFRL…VEVM), 841–861 (VFVL…PCLL), and 952–972 (ATFL…TVPV).

The protein belongs to the MCTP family. Ca(2+) is required as a cofactor. As to expression, highly expressed in roots meristems, shoot apical meristems (SAMs) and in incipient leaf primordia. Observed in flowers.

The protein resides in the endoplasmic reticulum membrane. Its function is as follows. May function as a signaling molecule by regulating the trafficking of other regulators. The chain is Multiple C2 domain and transmembrane region protein 10 from Arabidopsis thaliana (Mouse-ear cress).